Consider the following 54-residue polypeptide: Ovomucoid (54 aa).

A Kazal-like domain is found at valine 4–cysteine 54. 3 disulfide bridges follow: cysteine 6–cysteine 36, cysteine 14–cysteine 33, and cysteine 22–cysteine 54. An N-linked (GlcNAc...) asparagine glycan is attached at asparagine 43.

It is found in the secreted. The chain is Ovomucoid from Chroicocephalus ridibundus (Black-headed gull).